A 472-amino-acid polypeptide reads, in one-letter code: Cysteine--tRNA ligase (472 aa).

Cys-27 is a binding site for Zn(2+). Positions 29 to 39 (PTVYNLIHIGN) match the 'HIGH' region motif. Residues Cys-214, His-239, and Glu-243 each contribute to the Zn(2+) site. The 'KMSKS' region motif lies at 271 to 275 (KMSKS). Lys-274 is an ATP binding site.

The protein belongs to the class-I aminoacyl-tRNA synthetase family. As to quaternary structure, monomer. Zn(2+) is required as a cofactor.

The protein resides in the cytoplasm. The catalysed reaction is tRNA(Cys) + L-cysteine + ATP = L-cysteinyl-tRNA(Cys) + AMP + diphosphate. The chain is Cysteine--tRNA ligase from Lachnospira eligens (strain ATCC 27750 / DSM 3376 / VPI C15-48 / C15-B4) (Eubacterium eligens).